Here is a 362-residue protein sequence, read N- to C-terminus: S-adenosylmethionine:tRNA ribosyltransferase-isomerase (362 aa).

This sequence belongs to the QueA family. In terms of assembly, monomer.

It is found in the cytoplasm. The catalysed reaction is 7-aminomethyl-7-carbaguanosine(34) in tRNA + S-adenosyl-L-methionine = epoxyqueuosine(34) in tRNA + adenine + L-methionine + 2 H(+). It functions in the pathway tRNA modification; tRNA-queuosine biosynthesis. Functionally, transfers and isomerizes the ribose moiety from AdoMet to the 7-aminomethyl group of 7-deazaguanine (preQ1-tRNA) to give epoxyqueuosine (oQ-tRNA). The sequence is that of S-adenosylmethionine:tRNA ribosyltransferase-isomerase from Deinococcus radiodurans (strain ATCC 13939 / DSM 20539 / JCM 16871 / CCUG 27074 / LMG 4051 / NBRC 15346 / NCIMB 9279 / VKM B-1422 / R1).